Here is a 591-residue protein sequence, read N- to C-terminus: uncharacterized protein (591 aa).

Positions methionine 1 to alanine 30 are cleaved as a signal peptide. Cysteine 31 is lipidated: N-palmitoyl cysteine. The S-diacylglycerol cysteine moiety is linked to residue cysteine 31. The segment covering lysine 476–glutamate 488 has biased composition (basic and acidic residues). Disordered regions lie at residues lysine 476–asparagine 497 and serine 510–glycine 535. Residues serine 510 to serine 523 are compositionally biased toward low complexity.

This sequence to T.pallidum TmpC.

It localises to the cell membrane. This is an uncharacterized protein from Mycoplasma genitalium (strain ATCC 33530 / DSM 19775 / NCTC 10195 / G37) (Mycoplasmoides genitalium).